The sequence spans 416 residues: Serine hydroxymethyltransferase 1 (416 aa).

(6S)-5,6,7,8-tetrahydrofolate contacts are provided by residues leucine 121 and 125 to 127; that span reads GHL. The residue at position 229 (lysine 229) is an N6-(pyridoxal phosphate)lysine. (6S)-5,6,7,8-tetrahydrofolate contacts are provided by residues glutamate 245 and 354–356; that span reads SPF.

Belongs to the SHMT family. Homodimer. Pyridoxal 5'-phosphate is required as a cofactor.

The protein resides in the cytoplasm. It catalyses the reaction (6R)-5,10-methylene-5,6,7,8-tetrahydrofolate + glycine + H2O = (6S)-5,6,7,8-tetrahydrofolate + L-serine. Its pathway is one-carbon metabolism; tetrahydrofolate interconversion. It functions in the pathway amino-acid biosynthesis; glycine biosynthesis; glycine from L-serine: step 1/1. Catalyzes the reversible interconversion of serine and glycine with tetrahydrofolate (THF) serving as the one-carbon carrier. This reaction serves as the major source of one-carbon groups required for the biosynthesis of purines, thymidylate, methionine, and other important biomolecules. Also exhibits THF-independent aldolase activity toward beta-hydroxyamino acids, producing glycine and aldehydes, via a retro-aldol mechanism. In Vibrio vulnificus (strain CMCP6), this protein is Serine hydroxymethyltransferase 1.